A 586-amino-acid chain; its full sequence is Eukaryotic translation initiation factor 3 subunit D (586 aa).

The interval 102–176 is disordered; it reads SAKRTFGRGG…DKPQRTREPS (75 aa). Residues 162 to 174 are compositionally biased toward basic and acidic residues; that stretch reads GWKDYDKPQRTRE. Positions 301-315 are RNA gate; sequence SLDLVTVNENAADAP. Residues 567 to 586 are disordered; the sequence is EEEEEVAAEEQEAAEEEAEE.

This sequence belongs to the eIF-3 subunit D family. As to quaternary structure, component of the eukaryotic translation initiation factor 3 (eIF-3) complex.

It localises to the cytoplasm. MRNA cap-binding component of the eukaryotic translation initiation factor 3 (eIF-3) complex, which is involved in protein synthesis of a specialized repertoire of mRNAs and, together with other initiation factors, stimulates binding of mRNA and methionyl-tRNAi to the 40S ribosome. The eIF-3 complex specifically targets and initiates translation of a subset of mRNAs involved in cell proliferation. In the eIF-3 complex, eif3d specifically recognizes and binds the 7-methylguanosine cap of a subset of mRNAs. The sequence is that of Eukaryotic translation initiation factor 3 subunit D from Aspergillus niger (strain ATCC MYA-4892 / CBS 513.88 / FGSC A1513).